The primary structure comprises 710 residues: Gastrulation-defective protein 3 (710 aa).

Residues 597-615 (AYYVFTVLALIISNFPTIV) traverse the membrane as a helical segment.

It localises to the membrane. This chain is Gastrulation-defective protein 3 (gadr-3), found in Caenorhabditis elegans.